The primary structure comprises 130 residues: Small ribosomal subunit protein uS8 (130 aa).

It belongs to the universal ribosomal protein uS8 family. As to quaternary structure, part of the 30S ribosomal subunit. Contacts proteins S5 and S12.

Functionally, one of the primary rRNA binding proteins, it binds directly to 16S rRNA central domain where it helps coordinate assembly of the platform of the 30S subunit. The chain is Small ribosomal subunit protein uS8 from Yersinia pseudotuberculosis serotype O:1b (strain IP 31758).